Here is a 329-residue protein sequence, read N- to C-terminus: Fructose-1,6-bisphosphatase class 1 (329 aa).

The Mg(2+) site is built by glutamate 84, aspartate 103, leucine 105, and aspartate 106. Residues 106–109, asparagine 196, and lysine 262 each bind substrate; that span reads DGSS. Residue glutamate 268 coordinates Mg(2+).

The protein belongs to the FBPase class 1 family. In terms of assembly, homotetramer. The cofactor is Mg(2+).

It localises to the cytoplasm. It catalyses the reaction beta-D-fructose 1,6-bisphosphate + H2O = beta-D-fructose 6-phosphate + phosphate. Its pathway is carbohydrate biosynthesis; gluconeogenesis. The sequence is that of Fructose-1,6-bisphosphatase class 1 from Shewanella woodyi (strain ATCC 51908 / MS32).